Reading from the N-terminus, the 213-residue chain is Protein-L-isoaspartate O-methyltransferase (213 aa).

Ser61 is an active-site residue.

The protein belongs to the methyltransferase superfamily. L-isoaspartyl/D-aspartyl protein methyltransferase family.

The protein localises to the cytoplasm. The catalysed reaction is [protein]-L-isoaspartate + S-adenosyl-L-methionine = [protein]-L-isoaspartate alpha-methyl ester + S-adenosyl-L-homocysteine. In terms of biological role, catalyzes the methyl esterification of L-isoaspartyl residues in peptides and proteins that result from spontaneous decomposition of normal L-aspartyl and L-asparaginyl residues. It plays a role in the repair and/or degradation of damaged proteins. This Petrotoga mobilis (strain DSM 10674 / SJ95) protein is Protein-L-isoaspartate O-methyltransferase.